Here is a 1497-residue protein sequence, read N- to C-terminus: DNA-directed RNA polymerase subunit beta (1497 aa).

This sequence belongs to the RNA polymerase beta chain family. As to quaternary structure, the RNAP catalytic core consists of 2 alpha, 1 beta, 1 beta' and 1 omega subunit. When a sigma factor is associated with the core the holoenzyme is formed, which can initiate transcription.

It catalyses the reaction RNA(n) + a ribonucleoside 5'-triphosphate = RNA(n+1) + diphosphate. In terms of biological role, DNA-dependent RNA polymerase catalyzes the transcription of DNA into RNA using the four ribonucleoside triphosphates as substrates. The chain is DNA-directed RNA polymerase subunit beta from Trichlorobacter lovleyi (strain ATCC BAA-1151 / DSM 17278 / SZ) (Geobacter lovleyi).